The sequence spans 207 residues: Ribosome maturation factor RimP (207 aa).

The disordered stretch occupies residues 171 to 207; that stretch reads RAPGGAPEEGEEDTTEAAPEGAGKSPKPGRRPARKTH. Positions 197-207 are enriched in basic residues; the sequence is KPGRRPARKTH.

The protein belongs to the RimP family.

It is found in the cytoplasm. In terms of biological role, required for maturation of 30S ribosomal subunits. The chain is Ribosome maturation factor RimP from Gluconacetobacter diazotrophicus (strain ATCC 49037 / DSM 5601 / CCUG 37298 / CIP 103539 / LMG 7603 / PAl5).